Reading from the N-terminus, the 210-residue chain is Beta-crystallin A4 (210 aa).

Residues 1 to 25 form an N-terminal arm region; that stretch reads MSGMFSGSISETSGMSLQCTKSAGH. Beta/gamma crystallin 'Greek key' domains follow at residues 26 to 65 and 66 to 112; these read WKIV…KVLS and GAWV…RPVA. Residues 113-118 form a connecting peptide region; that stretch reads CANHRD. Beta/gamma crystallin 'Greek key' domains are found at residues 119-160 and 161-209; these read SRLT…HVHS and GAWV…RRIQ.

This sequence belongs to the beta/gamma-crystallin family. Homo/heterodimer, or complexes of higher-order. The structure of beta-crystallin oligomers seems to be stabilized through interactions between the N-terminal arms.

Crystallins are the dominant structural components of the vertebrate eye lens. In Bos taurus (Bovine), this protein is Beta-crystallin A4 (CRYBA4).